We begin with the raw amino-acid sequence, 56 residues long: PI-stichotoxin-Hmg3a (56 aa).

Residues 4–54 form the BPTI/Kunitz inhibitor domain; sequence CLEPKVVGPCKARIRRFYYDSETGKCTPFIYGGCGGNGNNFETLHACRGIC. Cystine bridges form between Cys-4/Cys-54, Cys-13/Cys-37, and Cys-29/Cys-50.

It belongs to the venom Kunitz-type family. Sea anemone type 2 potassium channel toxin subfamily. In terms of processing, contains three disulfide bonds.

Its subcellular location is the secreted. The protein resides in the nematocyst. Its function is as follows. Serine protease inhibitor that inhibits trypsin (Ki=50 nM) and probably also chymotrypsin (Kd=1.6 nM). Has an anti-inflammatory effect in LPS-activated macrophages in vitro, specifically reducing release of TNF and IL6 but not nitric oxide and reducing expression of IL1B precursor. This is PI-stichotoxin-Hmg3a from Heteractis magnifica (Magnificent sea anemone).